The chain runs to 120 residues: Large ribosomal subunit protein uL18 (120 aa).

The protein belongs to the universal ribosomal protein uL18 family. In terms of assembly, part of the 50S ribosomal subunit; part of the 5S rRNA/L5/L18/L25 subcomplex. Contacts the 5S and 23S rRNAs.

Its function is as follows. This is one of the proteins that bind and probably mediate the attachment of the 5S RNA into the large ribosomal subunit, where it forms part of the central protuberance. The polypeptide is Large ribosomal subunit protein uL18 (Staphylococcus saprophyticus subsp. saprophyticus (strain ATCC 15305 / DSM 20229 / NCIMB 8711 / NCTC 7292 / S-41)).